The chain runs to 977 residues: Probable RNA-dependent RNA polymerase 5 (977 aa).

Residues 103–122 are disordered; it reads EEMSVDSDAPSPKSLKSEDK.

It belongs to the RdRP family.

The enzyme catalyses RNA(n) + a ribonucleoside 5'-triphosphate = RNA(n+1) + diphosphate. Functionally, probably involved in the RNA silencing pathway and required for the generation of small interfering RNAs (siRNAs). The polypeptide is Probable RNA-dependent RNA polymerase 5 (RDR5) (Arabidopsis thaliana (Mouse-ear cress)).